Reading from the N-terminus, the 1053-residue chain is Putative ABC transporter C family member 15 (1053 aa).

Residues methionine 1–glutamine 180 form the ABC transmembrane type-1 1 domain. A run of 4 helical transmembrane segments spans residues phenylalanine 11–isoleucine 31, leucine 36–proline 56, phenylalanine 125–methionine 145, and alanine 151–leucine 171. An ABC transporter 1 domain is found at valine 214 to cysteine 437. Glycine 249–serine 256 contributes to the ATP binding site. The next 5 membrane-spanning stretches (helical) occupy residues leucine 481–tryptophan 503, isoleucine 523–isoleucine 543, methionine 595–valine 615, leucine 714–isoleucine 734, and isoleucine 738–tryptophan 758. In terms of domain architecture, ABC transmembrane type-1 2 spans valine 483–asparagine 765. One can recognise an ABC transporter 2 domain in the interval phenylalanine 804–lysine 1036. ATP is bound at residue glycine 836–serine 843.

Belongs to the ABC transporter superfamily. ABCC family. Conjugate transporter (TC 3.A.1.208) subfamily.

It localises to the membrane. It carries out the reaction ATP + H2O + xenobioticSide 1 = ADP + phosphate + xenobioticSide 2.. Functionally, pump for glutathione S-conjugates. The chain is Putative ABC transporter C family member 15 (ABCC15) from Arabidopsis thaliana (Mouse-ear cress).